The following is a 135-amino-acid chain: Large ribosomal subunit protein uL18 (135 aa).

Residues 1 to 23 (MSQTANQKAKRIPLGKDASTKRR) form a disordered region.

It belongs to the universal ribosomal protein uL18 family. In terms of assembly, part of the 50S ribosomal subunit; part of the 5S rRNA/L5/L18/L25 subcomplex. Contacts the 5S and 23S rRNAs.

This is one of the proteins that bind and probably mediate the attachment of the 5S RNA into the large ribosomal subunit, where it forms part of the central protuberance. This chain is Large ribosomal subunit protein uL18, found in Rhodococcus jostii (strain RHA1).